A 553-amino-acid chain; its full sequence is Putative transport protein YidE (553 aa).

A run of 5 helical transmembrane segments spans residues 4-24 (IALTVSVLALVAVVGLWIGNI), 28-48 (GVGFGIGGVLFGGIIVGHFVD), 65-85 (FGLILFVYTIGIQVGPGFFAS), 95-115 (LFAVLIVIMGGLVTAILHKIF), and 158-178 (MSYAMAYPFGICGILLTMWLM). 2 consecutive RCK C-terminal domains span residues 192 to 276 (KHES…VIGK) and 279 to 361 (DTSL…VVGN). 6 helical membrane-spanning segments follow: residues 371–391 (MLPVFIGIGLGVLLGSIPLFV), 393–413 (GFPVALKLGLAGGPLIMALIL), 437–457 (LGIVLFLAVVGLKSGGDFVDT), 464–484 (LSWIGYGIFITAIPLITVGLL), 493–513 (YLTLCGMLAGSMTDPPALAFA), and 533–553 (LVMFLRIITPQLLAVIFWGMG).

This sequence belongs to the AAE transporter (TC 2.A.81) family. YidE subfamily.

Its subcellular location is the cell membrane. The sequence is that of Putative transport protein YidE from Salmonella newport (strain SL254).